Consider the following 176-residue polypeptide: Protein singles bar (176 aa).

4 helical membrane-spanning segments follow: residues 13–35 (LGIRICCCRVCTCINFGFVLSRI), 71–91 (FLATTGHCFTTTGILLLCYAF), 111–131 (LASCMYFSSSSYMGFACVVWL), and 140–160 (GFWAYPAMTACYYMGYAAGIL). One can recognise an MARVEL domain in the interval 30 to 173 (FVLSRIGLLK…DAYLAFRHFR (144 aa)).

It localises to the membrane. Its function is as follows. Essential for myoblast fusion in developing embryos and pupae, and consequently is essential for muscle formation in adults. Required for progression past the pre-fusion complex stage of myoblast fusion. The sequence is that of Protein singles bar from Drosophila melanogaster (Fruit fly).